The following is a 388-amino-acid chain: Methylthioribose-1-phosphate isomerase (388 aa).

Asp252 functions as the Proton donor in the catalytic mechanism.

Belongs to the eIF-2B alpha/beta/delta subunits family. MtnA subfamily.

Its subcellular location is the cytoplasm. The protein localises to the nucleus. It catalyses the reaction 5-(methylsulfanyl)-alpha-D-ribose 1-phosphate = 5-(methylsulfanyl)-D-ribulose 1-phosphate. It participates in amino-acid biosynthesis; L-methionine biosynthesis via salvage pathway; L-methionine from S-methyl-5-thio-alpha-D-ribose 1-phosphate: step 1/6. Functionally, catalyzes the interconversion of methylthioribose-1-phosphate (MTR-1-P) into methylthioribulose-1-phosphate (MTRu-1-P). The polypeptide is Methylthioribose-1-phosphate isomerase (Verticillium alfalfae (strain VaMs.102 / ATCC MYA-4576 / FGSC 10136) (Verticillium wilt of alfalfa)).